Consider the following 176-residue polypeptide: Membrane glycoprotein UL144 (176 aa).

Positions 1–20 are cleaved as a signal peptide; it reads MKPLVMLICFGVILLQLGVT. The stretch at 58-95 is one TNFR-Cys repeat; the sequence is PCPNGTYVSGLYNCTDCTQCNVTQVMIRNCTSTNNTVC. Cystine bridges form between Cys59–Cys71, Cys74–Cys87, and Cys77–Cys95. A helical membrane pass occupies residues 134-154; that stretch reads LAWLSLFIFLVGIILLILYLI.

In terms of assembly, interacts with host TRIM23; this interaction causes auto-ubiquitination of TRAF6, leading to NF-kappaB activation.

Its subcellular location is the membrane. Functionally, activates NF-kappa-B in a tumor necrosis factor receptor (TNFR)-associated factor 6 (TRAF6)-dependent manner, causing the up-regulation of the chemokine CCL22. This is Membrane glycoprotein UL144 (UL144) from Human cytomegalovirus (strain Merlin) (HHV-5).